We begin with the raw amino-acid sequence, 246 residues long: Ribonuclease PH (246 aa).

Phosphate-binding positions include Arg91 and Gly129–Arg131.

It belongs to the RNase PH family. Homohexameric ring arranged as a trimer of dimers.

The enzyme catalyses tRNA(n+1) + phosphate = tRNA(n) + a ribonucleoside 5'-diphosphate. In terms of biological role, phosphorolytic 3'-5' exoribonuclease that plays an important role in tRNA 3'-end maturation. Removes nucleotide residues following the 3'-CCA terminus of tRNAs; can also add nucleotides to the ends of RNA molecules by using nucleoside diphosphates as substrates, but this may not be physiologically important. Probably plays a role in initiation of 16S rRNA degradation (leading to ribosome degradation) during starvation. This is Ribonuclease PH from Paraburkholderia xenovorans (strain LB400).